Consider the following 301-residue polypeptide: Phosducin-like protein (301 aa).

Position 2 is an N-acetylthreonine (Thr2). Residues 18–57 are disordered; the sequence is SSSEDEDSDHEDKDRGRCAPASSSVPAEAELAGEGISVNT. Phosphoserine is present on residues Ser20 and Ser25. Over residues 36–49 the composition is skewed to low complexity; the sequence is APASSSVPAEAELA. The Phosducin domain maps to 36 to 299; it reads APASSSVPAE…TCHSEDSDLE (264 aa). Ser226, Ser293, and Ser296 each carry phosphoserine.

This sequence belongs to the phosducin family. In terms of assembly, forms a complex with the beta and gamma subunits of the GTP-binding protein, transducin. Interacts with the CCT chaperonin complex.

The protein localises to the cell projection. The protein resides in the cilium. Functionally, acts as a positive regulator of hedgehog signaling and regulates ciliary function. Its function is as follows. Functions as a co-chaperone for CCT in the assembly of heterotrimeric G protein complexes, facilitates the assembly of both Gbeta-Ggamma and RGS-Gbeta5 heterodimers. In terms of biological role, acts as a negative regulator of heterotrimeric G proteins assembly by trapping the preloaded G beta subunits inside the CCT chaperonin. The sequence is that of Phosducin-like protein (PDCL) from Homo sapiens (Human).